The primary structure comprises 303 residues: Ferrochelatase (303 aa).

Fe cation contacts are provided by His185 and Glu262.

The protein belongs to the ferrochelatase family.

The protein localises to the cytoplasm. It carries out the reaction heme b + 2 H(+) = protoporphyrin IX + Fe(2+). It participates in porphyrin-containing compound metabolism; protoheme biosynthesis; protoheme from protoporphyrin-IX: step 1/1. Functionally, catalyzes the ferrous insertion into protoporphyrin IX. The protein is Ferrochelatase of Campylobacter jejuni subsp. doylei (strain ATCC BAA-1458 / RM4099 / 269.97).